A 712-amino-acid polypeptide reads, in one-letter code: Interleukin-1 receptor-associated kinase 1 (712 aa).

The Death domain maps to 27-106 (MCRFYKVMDA…DIITAWHPPA (80 aa)). At Thr66 the chain carries Phosphothreonine; by PKC/PRKCI. The interval 105-187 (PAPLPSPGTT…STKPGPESSV (83 aa)) is disordered. The tract at residues 110–211 (SPGTTAPRPS…LCEISRGTHN (102 aa)) is proST region. Residues 115-133 (APRPSSIPAPAEAEAWSPR) show a composition bias toward low complexity. Ser131 carries the phosphoserine modification. Lys134 participates in a covalent cross-link: Glycyl lysine isopeptide (Lys-Gly) (interchain with G-Cter in ubiquitin). Residues 137 to 154 (SSASTFLSPAFPGSQTHS) show a composition bias toward polar residues. A Glycyl lysine isopeptide (Lys-Gly) (interchain with G-Cter in ubiquitin) cross-link involves residue Lys180. Position 209 is a phosphothreonine; by IRAK4 (Thr209). One can recognise a Protein kinase domain in the interval 212–521 (FSEELKIGEG…TQVYERLEKL (310 aa)). Residues 218–226 (IGEGGFGCV) and Lys239 each bind ATP. Asp340 (proton acceptor) is an active-site residue. ATP-binding positions include 342–345 (KSSN) and Asp358. Residues Ser371 and Ser375 each carry the phosphoserine modification. At Thr387 the chain carries Phosphothreonine. Disordered regions lie at residues 532–591 (SEAA…SDES), 613–660 (APLR…PPQI), and 690–712 (SSLP…EFQS). The segment covering 543–553 (QENSYVSSTGR) has biased composition (polar residues). Ser556 carries the post-translational modification Phosphoserine. 2 stretches are compositionally biased toward low complexity: residues 562–575 (QPLA…AQAA) and 643–658 (EGLA…SEPP).

It belongs to the protein kinase superfamily. TKL Ser/Thr protein kinase family. Pelle subfamily. In terms of assembly, homodimer. Forms a complex with TRAF6, PELI1, IRAK4 and MYD88. Direct binding of SMAD6 to PELI1 prevents complex formation and hence negatively regulates IL1R-TLR signaling and eventually NF-kappa-B-mediated gene expression. The TRAF6-PELI1-IRAK4-MYD88 complex recruits MAP3K7/TAK1, TAB1 and TAB2 to mediate NF-kappa-B activation. Interaction with MYD88 recruits IRAK1 to the stimulated receptor complex. Interacts with TOLLIP; this interaction occurs in the cytosol prior to receptor activation. Interacts with IL1RL1. Interacts with PELI1 and TRAF6. Interacts (when polyubiquitinated) with IKBKG/NEMO. Interacts with RSAD2/viperin. Interacts with IRAK1BP1. Interacts with PELI2. Interacts with ZC3H12A; this interaction increases the interaction between ZC3H12A and IKBKB/IKKB. Interacts with IRAK4. Interacts with PELI3. Interacts with INAVA; the interaction takes place upon PRR stimulation. Interacts (via C-terminus) with NFATC4 (via N-terminus). As to quaternary structure, (Microbial infection) Interacts with mumps virus protein SH; this interaction inhibits downstream NF-kappa-B pathway activation. (Microbial infection) Interacts with alphaviruses SINV, CHIKV, RRV, VEEV and EEEV capsid proteins; the interactions lead to inhibition of IRAK1-dependent signaling. Requires Mg(2+) as cofactor. In terms of processing, following recruitment on the activated receptor complex, phosphorylated on Thr-209, probably by IRAK4, resulting in a conformational change of the kinase domain, allowing further phosphorylations to take place. Thr-387 phosphorylation in the activation loop is required to achieve full enzymatic activity. Post-translationally, polyubiquitinated by TRAF6 after cell stimulation with IL-1-beta by PELI1, PELI2 and PELI3. Polyubiquitination occurs with polyubiquitin chains linked through 'Lys-63'. Ubiquitination promotes interaction with NEMO/IKBKG. Also sumoylated; leading to nuclear translocation. In terms of tissue distribution, isoform 1 and isoform 2 are ubiquitously expressed in all tissues examined, with isoform 1 being more strongly expressed than isoform 2.

The protein localises to the cytoplasm. It is found in the nucleus. Its subcellular location is the lipid droplet. The catalysed reaction is L-seryl-[protein] + ATP = O-phospho-L-seryl-[protein] + ADP + H(+). It catalyses the reaction L-threonyl-[protein] + ATP = O-phospho-L-threonyl-[protein] + ADP + H(+). Its function is as follows. Serine/threonine-protein kinase that plays a critical role in initiating innate immune response against foreign pathogens. Involved in Toll-like receptor (TLR) and IL-1R signaling pathways. Is rapidly recruited by MYD88 to the receptor-signaling complex upon TLR activation. Association with MYD88 leads to IRAK1 phosphorylation by IRAK4 and subsequent autophosphorylation and kinase activation. Phosphorylates E3 ubiquitin ligases Pellino proteins (PELI1, PELI2 and PELI3) to promote pellino-mediated polyubiquitination of IRAK1. Then, the ubiquitin-binding domain of IKBKG/NEMO binds to polyubiquitinated IRAK1 bringing together the IRAK1-MAP3K7/TAK1-TRAF6 complex and the NEMO-IKKA-IKKB complex. In turn, MAP3K7/TAK1 activates IKKs (CHUK/IKKA and IKBKB/IKKB) leading to NF-kappa-B nuclear translocation and activation. Alternatively, phosphorylates TIRAP to promote its ubiquitination and subsequent degradation. Phosphorylates the interferon regulatory factor 7 (IRF7) to induce its activation and translocation to the nucleus, resulting in transcriptional activation of type I IFN genes, which drive the cell in an antiviral state. When sumoylated, translocates to the nucleus and phosphorylates STAT3. This Homo sapiens (Human) protein is Interleukin-1 receptor-associated kinase 1.